A 159-amino-acid chain; its full sequence is uncharacterized protein (159 aa).

This sequence belongs to the IIV-6 136R family.

This is an uncharacterized protein from Invertebrate iridescent virus 3 (IIV-3).